We begin with the raw amino-acid sequence, 97 residues long: Cell division protein FtsL (97 aa).

Over 1 to 11 (MSRLFVKRLPT) the chain is Cytoplasmic. The chain crosses the membrane as a helical span at residues 12–32 (GSFLMLLLYIGLLLSAIAVAY). The Periplasmic segment spans residues 33–97 (STYWNRQLLN…DPAEVRMVAP (65 aa)).

This sequence belongs to the FtsL family. Part of a complex composed of FtsB, FtsL and FtsQ.

The protein localises to the cell inner membrane. Functionally, essential cell division protein. May link together the upstream cell division proteins, which are predominantly cytoplasmic, with the downstream cell division proteins, which are predominantly periplasmic. The sequence is that of Cell division protein FtsL from Pseudomonas aeruginosa (strain ATCC 15692 / DSM 22644 / CIP 104116 / JCM 14847 / LMG 12228 / 1C / PRS 101 / PAO1).